We begin with the raw amino-acid sequence, 39 residues long: Potassium channel toxin alpha-KTx 2.2 (39 aa).

3 disulfides stabilise this stretch: Cys-7–Cys-29, Cys-13–Cys-34, and Cys-17–Cys-36. The segment at 37-39 is interaction with Kv1.3 channels; that stretch reads YPH.

It belongs to the short scorpion toxin superfamily. Potassium channel inhibitor family. Alpha-KTx 02 subfamily. Expressed by the venom gland.

The protein localises to the secreted. In terms of biological role, potent inhibitor of voltage-gated potassium channels such as Kv1.1/KCNA1 (IC(50)=0.144 nM), Kv1.2/KCNA2 (IC(50)=0.675 nM), Kv1.3/KCNA3 (IC(50)=0.23 nM) and Shaker (Kd=160 nM). Suppresses expression of the Kv1.3/KCNA3 channel in lipopolysaccharide (LPS)-stimulated mouse macrophages. Down-regulates secretion of nitric oxide (NO) and inflammatory cytokines, such as TNF-alpha/TNF, IL-1beta/IL1B and IL6, in LPS-stimulated mouse macrophages in a manner dependent on Kv1.3/KCNA3 channel blockage. Reduces activation of MAPK and NF-kappa-B signaling pathways in LPS-stimulated mouse macrophages. Modulates intracellular Ca(2+) signaling in human PMA/ionomycin-triggered T-cells. Interferes with the activation of the MAPK, NF-kappa-B and NFATc1 pathways in human PMA/ionomycin-triggered T-cells. Reduces proliferation of human PMA/ionomycin-triggered T-cells. Down-regulates secretion of cytokines, such as TNF-alpha/TNF and IL2, in human PMA/ionomycin-triggered T-cells. The polypeptide is Potassium channel toxin alpha-KTx 2.2 (Centruroides margaritatus (Central American bark Scorpion)).